The primary structure comprises 516 residues: uncharacterized protein (516 aa).

PFTB repeat units follow at residues 45–86 (RQDA…QRAD) and 401–443 (DERA…DGSE).

This is an uncharacterized protein from Bradyrhizobium diazoefficiens (strain JCM 10833 / BCRC 13528 / IAM 13628 / NBRC 14792 / USDA 110).